We begin with the raw amino-acid sequence, 96 residues long: Prokineticin Bm8-e (96 aa).

The first 19 residues, 1-19, serve as a signal peptide directing secretion; that stretch reads MKCFAQIVVLLLVIAFSHG. 5 cysteine pairs are disulfide-bonded: cysteine 26–cysteine 38, cysteine 32–cysteine 50, cysteine 37–cysteine 78, cysteine 60–cysteine 86, and cysteine 80–cysteine 95.

It belongs to the AVIT (prokineticin) family. In terms of tissue distribution, expressed by the skin glands.

It is found in the secreted. Its function is as follows. Potent agonist for both PKR1/PROKR1 and PKR2/PROKR2, and inducer of a potent and long-lasting hyperalgesia. Also potentiates capsaicin-induced TRPV1 current, when tested on DRG neurons. At subnanomolar concentrations, this protein both induces potent chemotaxis of macrophages and stimulates LPS-induced production of the pro-inflammatory cytokines IL-1 and IL-12. In vivo, potently stimulates the contraction of the guinea-pig gastrointestinal (GI) smooth muscle (nanomolar concentration). The protein is Prokineticin Bm8-e of Bombina maxima (Giant fire-bellied toad).